Reading from the N-terminus, the 155-residue chain is Protein-export protein SecB (155 aa).

This sequence belongs to the SecB family. As to quaternary structure, homotetramer, a dimer of dimers. One homotetramer interacts with 1 SecA dimer.

The protein resides in the cytoplasm. In terms of biological role, one of the proteins required for the normal export of preproteins out of the cell cytoplasm. It is a molecular chaperone that binds to a subset of precursor proteins, maintaining them in a translocation-competent state. It also specifically binds to its receptor SecA. The polypeptide is Protein-export protein SecB (Shigella sonnei (strain Ss046)).